Here is a 67-residue protein sequence, read N- to C-terminus: DNA-directed RNA polymerases I, II, and III subunit RPABC5 (67 aa).

Residues cysteine 7, cysteine 10, cysteine 44, and cysteine 45 each coordinate Zn(2+).

The protein belongs to the archaeal Rpo10/eukaryotic RPB10 RNA polymerase subunit family. In terms of assembly, component of the RNA polymerase I (Pol I), RNA polymerase II (Pol II) and RNA polymerase III (Pol III) complexes consisting of at least 13, 12 and 17 subunits, respectively. Pol I complex consists of a ten-subunit catalytic core composed of POLR1A/RPA1, POLR1B/RPA2, POLR1C/RPAC1, POLR1D/RPAC2, POLR1H/RPA12, POLR2E/RPABC1, POLR2F/RPABC2, POLR2H/RPABC3, POLR2K/RPABC4 and POLR2L/RPABC5; a mobile stalk subunit POLR1F/RPA43 protruding from the core and additional subunits homologous to general transcription factors POLR1E/RPA49 and POLR1G/RPA34. Part of Pol I pre-initiation complex (PIC), in which Pol I core assembles with RRN3 and promoter-bound UTBF and SL1/TIF-IB complex. Pol II complex contains a ten-subunit catalytic core composed of POLR2A/RPB1, POLR2B/RPB2, POLR2C/RPB3, POLR2I/RPB9, POLR2J/RPB11, POLR2E/RPABC1, POLR2F/RPABC2, POLR2H/RPABC3, POLR2K/RPABC4 and POLR2L/RPABC5 and a mobile stalk composed of two subunits POLR2D/RPB4 and POLR2G/RPB7. Part of Pol II(G) complex, in which Pol II core associates with an additional subunit POLR2M; unlike conventional Pol II, Pol II(G) functions as a transcriptional repressor. Part of TBP-based Pol II pre-initiation complex (PIC), in which Pol II core assembles with general transcription factors and other specific initiation factors including GTF2E1, GTF2E2, GTF2F1, GTF2F2, TCEA1, ERCC2, ERCC3, GTF2H2, GTF2H3, GTF2H4, GTF2H5, GTF2A1, GTF2A2, GTF2B and TBP; this large multi-subunit PIC complex mediates DNA unwinding and targets Pol II core to the transcription start site where the first phosphodiester bond forms. Pol III complex consists of a ten-subunit catalytic core composed of POLR3A/RPC1, POLR3B/RPC2, POLR1C/RPAC1, POLR1D/RPAC2, POLR3K/RPC10, POLR2E/RPABC1, POLR2F/RPABC2, POLR2H/RPABC3, POLR2K/RPABC4 and POLR2L/RPABC5; a mobile stalk composed of two subunits POLR3H/RPC8 and CRCP/RPC9, protruding from the core and functioning primarily in transcription initiation; and additional subunits homologous to general transcription factors of the RNA polymerase II machinery, POLR3C/RPC3-POLR3F/RPC6-POLR3G/RPC7 heterotrimer required for transcription initiation and POLR3D/RPC4-POLR3E/RPC5 heterodimer involved in both transcription initiation and termination.

Its subcellular location is the nucleus. It is found in the nucleolus. DNA-dependent RNA polymerase catalyzes the transcription of DNA into RNA using the four ribonucleoside triphosphates as substrates. Common component of RNA polymerases I, II and III which synthesize ribosomal RNA precursors, mRNA precursors and many functional non-coding RNAs, and a small RNAs, such as 5S rRNA and tRNAs, respectively. This Bos taurus (Bovine) protein is DNA-directed RNA polymerases I, II, and III subunit RPABC5 (POLR2L).